The primary structure comprises 260 residues: Neuraminyllactose-binding hemagglutinin (260 aa).

Residues 1 to 27 (MKANNHFKDFAWKKCLLGASVVALLVG) form the signal peptide. Cysteine 28 is lipidated: N-palmitoyl cysteine. Cysteine 28 carries S-diacylglycerol cysteine lipidation.

It is found in the cell outer membrane. This Helicobacter pylori (strain ATCC 700392 / 26695) (Campylobacter pylori) protein is Neuraminyllactose-binding hemagglutinin (hpaA).